A 306-amino-acid polypeptide reads, in one-letter code: Pantothenate kinase (306 aa).

90-97 (GSVAVGKS) provides a ligand contact to ATP.

The protein belongs to the prokaryotic pantothenate kinase family.

The protein resides in the cytoplasm. The enzyme catalyses (R)-pantothenate + ATP = (R)-4'-phosphopantothenate + ADP + H(+). It functions in the pathway cofactor biosynthesis; coenzyme A biosynthesis; CoA from (R)-pantothenate: step 1/5. The protein is Pantothenate kinase of Listeria welshimeri serovar 6b (strain ATCC 35897 / DSM 20650 / CCUG 15529 / CIP 8149 / NCTC 11857 / SLCC 5334 / V8).